The following is a 434-amino-acid chain: Histidinol dehydrogenase (434 aa).

Residues Tyr-130, Gln-188, and Asn-211 each coordinate NAD(+). Residues Ser-237, Gln-259, and His-262 each coordinate substrate. Positions 259 and 262 each coordinate Zn(2+). Residues Glu-326 and His-327 each act as proton acceptor in the active site. 4 residues coordinate substrate: His-327, Asp-360, Glu-414, and His-419. Asp-360 contributes to the Zn(2+) binding site. Residue His-419 participates in Zn(2+) binding.

This sequence belongs to the histidinol dehydrogenase family. As to quaternary structure, homodimer. Zn(2+) serves as cofactor.

It catalyses the reaction L-histidinol + 2 NAD(+) + H2O = L-histidine + 2 NADH + 3 H(+). It functions in the pathway amino-acid biosynthesis; L-histidine biosynthesis; L-histidine from 5-phospho-alpha-D-ribose 1-diphosphate: step 9/9. In terms of biological role, catalyzes the sequential NAD-dependent oxidations of L-histidinol to L-histidinaldehyde and then to L-histidine. The protein is Histidinol dehydrogenase of Shigella flexneri.